Reading from the N-terminus, the 506-residue chain is Glycine--tRNA ligase (506 aa).

Residues arginine 99 and glutamate 189 each contribute to the substrate site. Residues 221–223 (RNE), 231–236 (FRVREL), 306–307 (EI), and 365–368 (GVDR) contribute to the ATP site. Position 236–240 (236–240 (LEQME)) interacts with substrate. 361–365 (EPSAG) is a substrate binding site.

The protein belongs to the class-II aminoacyl-tRNA synthetase family. Homodimer.

Its subcellular location is the cytoplasm. The catalysed reaction is tRNA(Gly) + glycine + ATP = glycyl-tRNA(Gly) + AMP + diphosphate. Catalyzes the attachment of glycine to tRNA(Gly). The sequence is that of Glycine--tRNA ligase from Deinococcus radiodurans (strain ATCC 13939 / DSM 20539 / JCM 16871 / CCUG 27074 / LMG 4051 / NBRC 15346 / NCIMB 9279 / VKM B-1422 / R1).